A 398-amino-acid polypeptide reads, in one-letter code: Cysteine protease ATG4A (398 aa).

Cysteine 77 functions as the Nucleophile in the catalytic mechanism. Active-site residues include aspartate 279 and histidine 281. Positions 393–396 (FEIL) match the LIR motif.

This sequence belongs to the peptidase C54 family. In terms of assembly, interacts with ATG9A; the interaction is direct.

The protein resides in the cytoplasm. The enzyme catalyses [protein]-C-terminal L-amino acid-glycyl-phosphatidylethanolamide + H2O = [protein]-C-terminal L-amino acid-glycine + a 1,2-diacyl-sn-glycero-3-phosphoethanolamine. Its activity is regulated as follows. Inhibited by N-ethylmaleimide. Redox-regulated during autophagy since reducing conditions activate ATG4A whereas an oxidizing environment such as the presence of H(2)O(2) inhibits its activity. Its function is as follows. Cysteine protease that plays a key role in autophagy by mediating both proteolytic activation and delipidation of ATG8 family proteins. The protease activity is required for proteolytic activation of ATG8 family proteins: cleaves the C-terminal amino acid of ATG8 proteins to reveal a C-terminal glycine. Exposure of the glycine at the C-terminus is essential for ATG8 proteins conjugation to phosphatidylethanolamine (PE) and insertion to membranes, which is necessary for autophagy. Preferred substrate is GABARAPL2 followed by MAP1LC3A and GABARAP. Protease activity is also required to counteract formation of high-molecular weight conjugates of ATG8 proteins (ATG8ylation): acts as a deubiquitinating-like enzyme that removes ATG8 conjugated to other proteins, such as ATG3. In addition to the protease activity, also mediates delipidation of ATG8 family proteins. Catalyzes delipidation of PE-conjugated forms of ATG8 proteins during macroautophagy. Compared to ATG4B, the major protein for proteolytic activation of ATG8 proteins, shows weaker ability to cleave the C-terminal amino acid of ATG8 proteins, while it displays stronger delipidation activity. Involved in phagophore growth during mitophagy independently of its protease activity and of ATG8 proteins: acts by regulating ATG9A trafficking to mitochondria and promoting phagophore-endoplasmic reticulum contacts during the lipid transfer phase of mitophagy. This Homo sapiens (Human) protein is Cysteine protease ATG4A.